The chain runs to 928 residues: cGMP-dependent 3',5'-cyclic phosphodiesterase (928 aa).

The residue at position 109 (S109) is a Phosphoserine. The tract at residues 188 to 210 is disordered; it reads RRPEAVQNTSADPSEDQKDEKGY. GAF domains lie at 228–365 and 397–536; these read DATS…GTVL and DVSV…GISI. Positions 419, 434, 453, 476, and 487 each coordinate 3',5'-cyclic GMP. One can recognise a PDEase domain in the interval 566 to 890; the sequence is SDDEYTKLLH…EHWTKVSHKF (325 aa). H644 acts as the Proton donor in catalysis. Zn(2+) is bound by residues H648, H684, D685, and D796. Residue D685 participates in Mg(2+) binding.

It belongs to the cyclic nucleotide phosphodiesterase family. PDE2 subfamily. As to quaternary structure, homodimer. Zn(2+) is required as a cofactor. The cofactor is Mg(2+). As to expression, expressed in brain and liver.

It is found in the cell membrane. The protein resides in the cytoplasm. It localises to the mitochondrion matrix. Its subcellular location is the mitochondrion inner membrane. The protein localises to the mitochondrion outer membrane. It catalyses the reaction a nucleoside 3',5'-cyclic phosphate + H2O = a nucleoside 5'-phosphate + H(+). The catalysed reaction is 3',5'-cyclic GMP + H2O = GMP + H(+). The enzyme catalyses 3',5'-cyclic AMP + H2O = AMP + H(+). Its activity is regulated as follows. The 3',5'-cyclic-AMP phosphodiesterase activity is stimulated by 3',5'-cyclic GMP. Specifically inhibited by Bay 60-7550. When repressed, protected from ionomycin- but not staurosporin-induced cell death. In terms of biological role, cGMP-activated cyclic nucleotide phosphodiesterase with a dual-specificity for the second messengers cAMP and cGMP, which are key regulators of many important physiological processes. Has a higher efficiency with cGMP compared to cAMP. Plays a role in cell growth and migration. Its function is as follows. Regulates mitochondrial cAMP levels and respiration. Involved in the regulation of mitochondria morphology/dynamics and apoptotic cell death via local modulation of cAMP/PKA signaling in the mitochondrion, including the monitoring of local cAMP levels at the outer mitochondrial membrane and of PKA-dependent phosphorylation of Dnm1l. This chain is cGMP-dependent 3',5'-cyclic phosphodiesterase, found in Rattus norvegicus (Rat).